We begin with the raw amino-acid sequence, 462 residues long: Violaxanthin de-epoxidase, chloroplastic (462 aa).

Cys231 and Cys362 are disulfide-bonded. A coiled-coil region spans residues 372 to 437 (IEKTVEEGER…RELSKEEMEF (66 aa)). Residues 380–391 (ERIIVKEVEEIE) are involved in the binding to the thylakoid membrane.

Belongs to the calycin superfamily. Lipocalin family. In terms of assembly, interacts in vitro with LTO1.

The protein resides in the plastid. It localises to the chloroplast thylakoid membrane. It catalyses the reaction all-trans-violaxanthin + 2 L-ascorbate = all-trans-zeaxanthin + 2 L-dehydroascorbate + 2 H2O. Activity limited by low ascorbate availability. Feedback inhibition by zeaxanthin. Requires the presence of micelle-forming lipids such as monogalactosyldiacylglyceride (MGDG). Low concentration of bilayer forming lipids, such as digalactosyldiacylglyceride (DGDG) or phosphatidylcholine, supports a slower but nearly complete activity. 80% of the specific activity in lumenal chloroplast fractions is lost in vitro in the presence of reduced thioredoxin. Part of the xanthophyll (or violaxanthin) cycle for controlling the concentration of zeaxanthin in chloroplasts. Catalyzes the two-step mono de-epoxidation reaction. Stereospecific for all-trans xanthophylls. Zeaxanthin induces the dissipation of excitation energy in the chlorophyll of the light-harvesting protein complex of photosystem II. The protein is Violaxanthin de-epoxidase, chloroplastic of Arabidopsis thaliana (Mouse-ear cress).